The chain runs to 66 residues: MEKKKGVRGKIILECTGCVRNSHNRVSKGVSRYITQKNRHNTPNRLELKKFCPRCYKHIIHGEIKK.

The protein belongs to the bacterial ribosomal protein bL33 family.

It localises to the plastid. The sequence is that of Large ribosomal subunit protein bL33c from Cuscuta gronovii (Common dodder).